The primary structure comprises 163 residues: Odorant-binding protein 1a (163 aa).

Positions 1 to 16 are cleaved as a signal peptide; that stretch reads MAKFLLLALTFGLAHA. Disulfide bonds link Cys-50/Cys-54 and Cys-69/Cys-161.

Belongs to the calycin superfamily. Lipocalin family. As to quaternary structure, may form a heterodimer with OBP1B. The N-terminus may be blocked. As to expression, expressed in nasal mucosa (at protein level). Specifically detected in septal and lateral nasal glands.

It localises to the secreted. Binds the chemical odorant 2-isobutyl-3-methoxypyrazine. This chain is Odorant-binding protein 1a, found in Mus musculus (Mouse).